A 116-amino-acid chain; its full sequence is Ribosome-binding factor A (116 aa).

It belongs to the RbfA family. Monomer. Binds 30S ribosomal subunits, but not 50S ribosomal subunits or 70S ribosomes.

The protein resides in the cytoplasm. Its function is as follows. One of several proteins that assist in the late maturation steps of the functional core of the 30S ribosomal subunit. Associates with free 30S ribosomal subunits (but not with 30S subunits that are part of 70S ribosomes or polysomes). Required for efficient processing of 16S rRNA. May interact with the 5'-terminal helix region of 16S rRNA. The chain is Ribosome-binding factor A from Staphylococcus aureus (strain JH9).